Here is a 488-residue protein sequence, read N- to C-terminus: Beta-amylase (488 aa).

3 residues coordinate substrate: Asp-51, His-91, and Asp-99. The active-site Proton donor is the Glu-184. Positions 293, 298, and 340 each coordinate substrate. The active-site Proton acceptor is the Glu-378. Substrate is bound by residues 379–380 and Arg-418; that span reads NA.

This sequence belongs to the glycosyl hydrolase 14 family.

The enzyme catalyses Hydrolysis of (1-&gt;4)-alpha-D-glucosidic linkages in polysaccharides so as to remove successive maltose units from the non-reducing ends of the chains.. The polypeptide is Beta-amylase (BMY1) (Zea mays (Maize)).